A 612-amino-acid chain; its full sequence is Threonine--tRNA ligase (612 aa).

Residues 218-509 (DHRKLGVELG…LSEHFGGNFP (292 aa)) are catalytic. Positions 310, 361, and 486 each coordinate Zn(2+).

This sequence belongs to the class-II aminoacyl-tRNA synthetase family. In terms of assembly, homodimer. Zn(2+) is required as a cofactor.

The protein resides in the cytoplasm. The enzyme catalyses tRNA(Thr) + L-threonine + ATP = L-threonyl-tRNA(Thr) + AMP + diphosphate + H(+). Its function is as follows. Catalyzes the attachment of threonine to tRNA(Thr) in a two-step reaction: L-threonine is first activated by ATP to form Thr-AMP and then transferred to the acceptor end of tRNA(Thr). Also edits incorrectly charged L-seryl-tRNA(Thr). This is Threonine--tRNA ligase from Helicobacter pylori (strain G27).